Consider the following 299-residue polypeptide: ATP phosphoribosyltransferase (299 aa).

The protein belongs to the ATP phosphoribosyltransferase family. Long subfamily. As to quaternary structure, equilibrium between an active dimeric form, an inactive hexameric form and higher aggregates. Interconversion between the various forms is largely reversible and is influenced by the natural substrates and inhibitors of the enzyme. The cofactor is Mg(2+).

The protein localises to the cytoplasm. It catalyses the reaction 1-(5-phospho-beta-D-ribosyl)-ATP + diphosphate = 5-phospho-alpha-D-ribose 1-diphosphate + ATP. The protein operates within amino-acid biosynthesis; L-histidine biosynthesis; L-histidine from 5-phospho-alpha-D-ribose 1-diphosphate: step 1/9. Its activity is regulated as follows. Feedback inhibited by histidine. Functionally, catalyzes the condensation of ATP and 5-phosphoribose 1-diphosphate to form N'-(5'-phosphoribosyl)-ATP (PR-ATP). Has a crucial role in the pathway because the rate of histidine biosynthesis seems to be controlled primarily by regulation of HisG enzymatic activity. This Escherichia coli O81 (strain ED1a) protein is ATP phosphoribosyltransferase.